Consider the following 158-residue polypeptide: Respiratory supercomplex factor 1, mitochondrial (158 aa).

The HIG1 domain maps to 5–96 (PSSFDVEDAD…KDKYDQKKKE (92 aa)). Helical transmembrane passes span 32 to 54 (PLVPIGTLLTTGAVILAAQNMRI) and 64 to 86 (FRWRVGLQAATLAALVAGSFIYG). Residues 99–158 (MKEKAKLREQLWIKELERRDAEAQDRKKKAEAARLKTKENEAAIQKLEQELKELEAKASK) are a coiled coil.

This sequence belongs to the RCF1 family. Associates with the respiratory chain complex III/complex IV supercomplex.

Its subcellular location is the mitochondrion membrane. Its function is as follows. Cytochrome c oxidase subunit which plays a role in assembly of respiratory supercomplexes. The polypeptide is Respiratory supercomplex factor 1, mitochondrial (RCF1) (Candida glabrata (strain ATCC 2001 / BCRC 20586 / JCM 3761 / NBRC 0622 / NRRL Y-65 / CBS 138) (Yeast)).